A 220-amino-acid chain; its full sequence is MKSYQNEFIKFAVEKRVLRFGDFTLKSGRMSPYFFNSGLFNSGASLARLGRFYAQAISGSGLAFEVLFGPAYKGIPLVTATAIALMEKYGRDIGYAFNRKEVKDHGEGGKVVGTPLKGARVLIVDDVISAGTSVREAATLIHAAGATLAGVAISLDRQEQGQGKQSAVQEVEAQYGIPVVSIACLDHLIRHLEEKPEMKEHLDKMQAYKKQYGVERVFNP.

K26 provides a ligand contact to 5-phospho-alpha-D-ribose 1-diphosphate. Orotate is bound at residue 34–35; it reads FF. Residues 72 to 73, R99, K100, K103, H105, and 125 to 133 each bind 5-phospho-alpha-D-ribose 1-diphosphate; these read YK and DDVISAGTS. Residues S129 and R157 each contribute to the orotate site.

It belongs to the purine/pyrimidine phosphoribosyltransferase family. PyrE subfamily. In terms of assembly, homodimer. Requires Mg(2+) as cofactor.

It carries out the reaction orotidine 5'-phosphate + diphosphate = orotate + 5-phospho-alpha-D-ribose 1-diphosphate. The protein operates within pyrimidine metabolism; UMP biosynthesis via de novo pathway; UMP from orotate: step 1/2. Functionally, catalyzes the transfer of a ribosyl phosphate group from 5-phosphoribose 1-diphosphate to orotate, leading to the formation of orotidine monophosphate (OMP). The sequence is that of Orotate phosphoribosyltransferase from Nitrosococcus oceani (strain ATCC 19707 / BCRC 17464 / JCM 30415 / NCIMB 11848 / C-107).